Here is a 945-residue protein sequence, read N- to C-terminus: MSNKKADSKPQAKYPVNLLDTPFPMRGDLPKREPQWVKEWEERGVYEKIRAASKGRPKFILHDGPPYANGDIHLGHAVNKILKDIVVKSRNMAGFDAPYVPGWDCHGMPIEIQIEKQFGKSLPAAEVMSKARAYATEQIEKQKAGFKRLGVLGDWADPYKTMNFVNEAEEIRALGKIIEKGYVYRGLKPVNWCFDCGSALAEAEVEYKDRTDPTIDVMFPFAEPEKTAQAFGLPALPRAEGGIVIWTTTPWTIPANQALNLHPEIVYALVDTERGLLIVAEERVAACMEEFKLSGRVVATAPGVKLVNLRFHHPLASAHPGYKRTAPVYLGDYVTTDTGTGVVHSSPAYGVEDFISCKTHGMTDSDIINPVMGDGRYIESLPLFGGLSIWDANPKVVDALRDAGTLLRSEKYTHSYMHCWRHKTPIIYRATSQWFAGMDVTPREGGKTLRETALEGVEATAFYPSWGKQRLFSMIANRPDWTLSRQRQWGVPMAFFVHKETGELHPRTLELLEEVAKRVEKSGIEAWQTLDPRELIGDDANLYEKNRDTLDVWFDSGTTHWHVLRGSHKDQLQFPADLYLEGSDQHRGWFHSSLLTASMLDGRAPYKGLLTHGFTVDGEGRKMSKSLGNGVDPHEVANRLGAEIIRLWIASTDYSGELAISEEILKRVTEGYRRIRNTLRFLLANLSDFDYAQHAVPVDEWLEIDRYAVAFSAQLQTELLAYYEKYEFHPVVAKLQTYCSEDLGGFYLDVLKDRLYTSAPDSRARRSAQTALYHLTQGLLRVLAPFLSFTAEEAWKVFQPASDTIFTETYYAYPDVADADALIDKWSLLRDVRGTVTKALEEARTANRIGSSLQAEVTVHASGARYDALASLGDDLKFVLITSAATVVKVDDEAQEGVDVAASKYQKCERCWHYREDVGAHADHPTLCGRCFSNLFENGEIRSAA.

Over residues 1 to 10 the composition is skewed to basic and acidic residues; it reads MSNKKADSKP. Residues 1–21 form a disordered region; sequence MSNKKADSKPQAKYPVNLLDT. The 'HIGH' region motif lies at 66-76; sequence PYANGDIHLGH. Glutamate 581 lines the L-isoleucyl-5'-AMP pocket. A 'KMSKS' region motif is present at residues 622 to 626; that stretch reads KMSKS. Lysine 625 serves as a coordination point for ATP. Residues cysteine 908, cysteine 911, cysteine 928, and cysteine 931 each contribute to the Zn(2+) site.

It belongs to the class-I aminoacyl-tRNA synthetase family. IleS type 1 subfamily. Monomer. The cofactor is Zn(2+).

It localises to the cytoplasm. It catalyses the reaction tRNA(Ile) + L-isoleucine + ATP = L-isoleucyl-tRNA(Ile) + AMP + diphosphate. In terms of biological role, catalyzes the attachment of isoleucine to tRNA(Ile). As IleRS can inadvertently accommodate and process structurally similar amino acids such as valine, to avoid such errors it has two additional distinct tRNA(Ile)-dependent editing activities. One activity is designated as 'pretransfer' editing and involves the hydrolysis of activated Val-AMP. The other activity is designated 'posttransfer' editing and involves deacylation of mischarged Val-tRNA(Ile). This chain is Isoleucine--tRNA ligase, found in Burkholderia multivorans (strain ATCC 17616 / 249).